A 595-amino-acid polypeptide reads, in one-letter code: DNA primase (595 aa).

Residues 38–62 (CPFHQEKTPSFTVSNSKRFFYCFGC) form a CHC2-type zinc finger. A Toprim domain is found at 250 to 332 (NHSILVEGYF…EKKISFIRLP (83 aa)). Residues E256, D300, and D302 each contribute to the Mg(2+) site.

This sequence belongs to the DnaG primase family. Monomer. Interacts with DnaB. Zn(2+) serves as cofactor. Requires Mg(2+) as cofactor.

The catalysed reaction is ssDNA + n NTP = ssDNA/pppN(pN)n-1 hybrid + (n-1) diphosphate.. RNA polymerase that catalyzes the synthesis of short RNA molecules used as primers for DNA polymerase during DNA replication. This is DNA primase from Rickettsia conorii (strain ATCC VR-613 / Malish 7).